A 462-amino-acid polypeptide reads, in one-letter code: UDP-N-acetylmuramate--L-alanine ligase (462 aa).

Residue 117–123 participates in ATP binding; that stretch reads GTHGKTT.

Belongs to the MurCDEF family.

Its subcellular location is the cytoplasm. It carries out the reaction UDP-N-acetyl-alpha-D-muramate + L-alanine + ATP = UDP-N-acetyl-alpha-D-muramoyl-L-alanine + ADP + phosphate + H(+). Its pathway is cell wall biogenesis; peptidoglycan biosynthesis. Functionally, cell wall formation. In Streptomyces coelicolor (strain ATCC BAA-471 / A3(2) / M145), this protein is UDP-N-acetylmuramate--L-alanine ligase.